The primary structure comprises 435 residues: Arginine biosynthesis bifunctional protein ArgJ, mitochondrial (435 aa).

Residues threonine 179, lysine 205, threonine 216, glutamate 302, asparagine 430, and serine 435 each contribute to the substrate site. The active-site Nucleophile is threonine 216.

This sequence belongs to the ArgJ family. In terms of assembly, heterodimer of an alpha and a beta chain. The alpha and beta chains are autoproteolytically processed from a single precursor protein within the mitochondrion.

The protein localises to the mitochondrion matrix. The enzyme catalyses N(2)-acetyl-L-ornithine + L-glutamate = N-acetyl-L-glutamate + L-ornithine. It carries out the reaction L-glutamate + acetyl-CoA = N-acetyl-L-glutamate + CoA + H(+). It participates in amino-acid biosynthesis; L-arginine biosynthesis; L-ornithine and N-acetyl-L-glutamate from L-glutamate and N(2)-acetyl-L-ornithine (cyclic): step 1/1. It functions in the pathway amino-acid biosynthesis; L-arginine biosynthesis; N(2)-acetyl-L-ornithine from L-glutamate: step 1/4. In terms of biological role, catalyzes two activities which are involved in the cyclic version of arginine biosynthesis: the synthesis of acetylglutamate from glutamate and acetyl-CoA, and of ornithine by transacetylation between acetylornithine and glutamate. The protein is Arginine biosynthesis bifunctional protein ArgJ, mitochondrial of Schizosaccharomyces japonicus (strain yFS275 / FY16936) (Fission yeast).